A 123-amino-acid polypeptide reads, in one-letter code: Large ribosomal subunit protein bL12 (123 aa).

It belongs to the bacterial ribosomal protein bL12 family. In terms of assembly, homodimer. Part of the ribosomal stalk of the 50S ribosomal subunit. Forms a multimeric L10(L12)X complex, where L10 forms an elongated spine to which 2 to 4 L12 dimers bind in a sequential fashion. Binds GTP-bound translation factors.

Its function is as follows. Forms part of the ribosomal stalk which helps the ribosome interact with GTP-bound translation factors. Is thus essential for accurate translation. This Rhodospirillum rubrum (strain ATCC 11170 / ATH 1.1.1 / DSM 467 / LMG 4362 / NCIMB 8255 / S1) protein is Large ribosomal subunit protein bL12.